Consider the following 460-residue polypeptide: tRNA-2-methylthio-N(6)-dimethylallyladenosine synthase (460 aa).

An MTTase N-terminal domain is found at glycine 10–serine 126. 6 residues coordinate [4Fe-4S] cluster: cysteine 19, cysteine 55, cysteine 89, cysteine 161, cysteine 165, and cysteine 168. Positions arginine 147–glutamate 384 constitute a Radical SAM core domain. The region spanning alanine 387–proline 455 is the TRAM domain.

The protein belongs to the methylthiotransferase family. MiaB subfamily. In terms of assembly, monomer. The cofactor is [4Fe-4S] cluster.

It is found in the cytoplasm. It carries out the reaction N(6)-dimethylallyladenosine(37) in tRNA + (sulfur carrier)-SH + AH2 + 2 S-adenosyl-L-methionine = 2-methylsulfanyl-N(6)-dimethylallyladenosine(37) in tRNA + (sulfur carrier)-H + 5'-deoxyadenosine + L-methionine + A + S-adenosyl-L-homocysteine + 2 H(+). Its function is as follows. Catalyzes the methylthiolation of N6-(dimethylallyl)adenosine (i(6)A), leading to the formation of 2-methylthio-N6-(dimethylallyl)adenosine (ms(2)i(6)A) at position 37 in tRNAs that read codons beginning with uridine. This is tRNA-2-methylthio-N(6)-dimethylallyladenosine synthase from Parasynechococcus marenigrum (strain WH8102).